The sequence spans 213 residues: Ribonuclease HII (213 aa).

One can recognise an RNase H type-2 domain in the interval Gly-2 to Arg-213. Positions 8, 9, and 113 each coordinate a divalent metal cation.

The protein belongs to the RNase HII family. Mn(2+) is required as a cofactor. Mg(2+) serves as cofactor.

The protein resides in the cytoplasm. It catalyses the reaction Endonucleolytic cleavage to 5'-phosphomonoester.. Its function is as follows. Endonuclease that specifically degrades the RNA of RNA-DNA hybrids. The sequence is that of Ribonuclease HII from Thermofilum pendens (strain DSM 2475 / Hrk 5).